The sequence spans 495 residues: Putative aldehyde dehydrogenase AldA (495 aa).

NAD(+) is bound at residue 212 to 218 (GKGSESG). Active-site residues include Glu256 and Cys290.

This sequence belongs to the aldehyde dehydrogenase family.

The catalysed reaction is an aldehyde + NAD(+) + H2O = a carboxylate + NADH + 2 H(+). This is Putative aldehyde dehydrogenase AldA (aldA) from Staphylococcus aureus (strain MSSA476).